Consider the following 515-residue polypeptide: MTKRALISVSDKAGIVEFAQELKKLGWEIISTGGTKVALDSAGVETIAIDDVTGFPEMMDGRVKTLHPNIHGGLLARRDLDSHLEAAKDNNIELIDLVVVNLYPFKETILKPDVTYADAVENIDIGGPSMLRSAAKNHASVTVVVDPADYAVVLDELSANGETTYETRQRLAAKVFRHTAAYDALIAEYFTAQVGESKPEKLTLTYDLKQAMRYGENPQQDADFYQKALPTDYSIASAKQLNGKELSFNNIRDADAAIRIIRDFKYRPTVVALKHMNPCGIGQADDIKTAWDYAYESDPVSIFGGIVVLNREVDAATAEKMHGVFLEIIIAPSYTDEALAILTNKKKNLRILALPFDAQEASEVEAEYTGVVGGLLVQNQDVVKESPADWQVVTKRQPTETEATALEFAWKAIKYVKSNGIIVTNDHMTLGVGPGQTNRVASVRIAIDQAKDRLDGAVLASDAFFPFADNVEEIAKAGIKAIIQPGGSVRDQESIEAADKYGLTMVFTGVRHFRH.

Residues M1–V145 form the MGS-like domain.

This sequence belongs to the PurH family.

It catalyses the reaction (6R)-10-formyltetrahydrofolate + 5-amino-1-(5-phospho-beta-D-ribosyl)imidazole-4-carboxamide = 5-formamido-1-(5-phospho-D-ribosyl)imidazole-4-carboxamide + (6S)-5,6,7,8-tetrahydrofolate. It carries out the reaction IMP + H2O = 5-formamido-1-(5-phospho-D-ribosyl)imidazole-4-carboxamide. Its pathway is purine metabolism; IMP biosynthesis via de novo pathway; 5-formamido-1-(5-phospho-D-ribosyl)imidazole-4-carboxamide from 5-amino-1-(5-phospho-D-ribosyl)imidazole-4-carboxamide (10-formyl THF route): step 1/1. The protein operates within purine metabolism; IMP biosynthesis via de novo pathway; IMP from 5-formamido-1-(5-phospho-D-ribosyl)imidazole-4-carboxamide: step 1/1. The protein is Bifunctional purine biosynthesis protein PurH of Streptococcus gordonii (strain Challis / ATCC 35105 / BCRC 15272 / CH1 / DL1 / V288).